We begin with the raw amino-acid sequence, 316 residues long: Small ribosomal subunit biogenesis GTPase RsgA (316 aa).

One can recognise a CP-type G domain in the interval 83–248 (DQYKSKLFAA…LIDSPGFQEF (166 aa)). Residues 131–134 (NKTD) and 185–193 (GQSGMGKST) each bind GTP. Zn(2+) contacts are provided by C272, C277, H279, and C285.

The protein belongs to the TRAFAC class YlqF/YawG GTPase family. RsgA subfamily. In terms of assembly, monomer. Associates with 30S ribosomal subunit, binds 16S rRNA. The cofactor is Zn(2+).

The protein localises to the cytoplasm. One of several proteins that assist in the late maturation steps of the functional core of the 30S ribosomal subunit. Helps release RbfA from mature subunits. May play a role in the assembly of ribosomal proteins into the subunit. Circularly permuted GTPase that catalyzes slow GTP hydrolysis, GTPase activity is stimulated by the 30S ribosomal subunit. This is Small ribosomal subunit biogenesis GTPase RsgA from Paraburkholderia phytofirmans (strain DSM 17436 / LMG 22146 / PsJN) (Burkholderia phytofirmans).